The sequence spans 338 residues: Uroporphyrinogen decarboxylase (338 aa).

Substrate is bound by residues 21–25 (RQAGR), Asp71, Tyr146, Ser201, and His316.

The protein belongs to the uroporphyrinogen decarboxylase family. Homodimer.

The protein localises to the cytoplasm. The enzyme catalyses uroporphyrinogen III + 4 H(+) = coproporphyrinogen III + 4 CO2. It participates in porphyrin-containing compound metabolism; protoporphyrin-IX biosynthesis; coproporphyrinogen-III from 5-aminolevulinate: step 4/4. Catalyzes the decarboxylation of four acetate groups of uroporphyrinogen-III to yield coproporphyrinogen-III. The sequence is that of Uroporphyrinogen decarboxylase from Rickettsia akari (strain Hartford).